The sequence spans 154 residues: UPF0178 protein Glov_0658 (154 aa).

This sequence belongs to the UPF0178 family.

The polypeptide is UPF0178 protein Glov_0658 (Trichlorobacter lovleyi (strain ATCC BAA-1151 / DSM 17278 / SZ) (Geobacter lovleyi)).